The chain runs to 221 residues: Ras-related protein Rab-27A (221 aa).

The residue at position 2 (serine 2) is an N-acetylserine. The residue at position 2 (serine 2) is a Phosphoserine. A GTP-binding site is contributed by 16–24 (GDSGVGKTS). The Effector region signature appears at 38–46 (FITTVGIDF). GTP is bound by residues 74 to 78 (DTAGQ), 133 to 136 (NKSD), and 163 to 165 (SAA). A disulfide bridge links cysteine 123 with cysteine 188. 2 S-geranylgeranyl cysteine lipidation sites follow: cysteine 219 and cysteine 221. At cysteine 221 the chain carries Cysteine methyl ester.

This sequence belongs to the small GTPase superfamily. Rab family. Binds SYTL1, SLAC2B, MYRIP, SYTL3, SYTL4 and SYTL5. Interacts with RPH3A and RPH3A. Binds MLPH and SYTL2. Interacts with UNC13D. Does not interact with the BLOC-3 complex (heterodimer of HPS1 and HPS4). Interacts (GDP-bound form preferentially) with DENND10. As to expression, high levels in eye, intestine, lung, pancreas and spleen, and low or absent in brain, liver, heart, kidney, and skeletal muscle.

It localises to the membrane. The protein localises to the melanosome. Its subcellular location is the late endosome. It is found in the lysosome. The catalysed reaction is GTP + H2O = GDP + phosphate + H(+). Regulated by guanine nucleotide exchange factors (GEFs) which promote the exchange of bound GDP for free GTP, GTPase activating proteins (GAPs) which increase the GTP hydrolysis activity, and GDP dissociation inhibitors which inhibit the dissociation of the nucleotide from the GTPase. Activated by GEFs such as DENND10. In terms of biological role, small GTPase which cycles between active GTP-bound and inactive GDP-bound states. In its active state, binds to a variety of effector proteins to regulate homeostasis of late endocytic pathway, including endosomal positioning, maturation and secretion. Plays a role in cytotoxic granule exocytosis in lymphocytes. Required for both granule maturation and granule docking and priming at the immunologic synapse. This chain is Ras-related protein Rab-27A (Rab27a), found in Rattus norvegicus (Rat).